We begin with the raw amino-acid sequence, 901 residues long: HTH-type transcriptional regulator MalT (901 aa).

ATP is bound at residue 39–46 (SPAGYGKT). The HTH luxR-type domain maps to 829-894 (ELIRTSPLTQ…AAVQHAQKLL (66 aa)). The segment at residues 853–872 (NEQIAGELEVAATTIKTHIR) is a DNA-binding region (H-T-H motif).

The protein belongs to the MalT family. As to quaternary structure, monomer in solution. Oligomerizes to an active state in the presence of the positive effectors ATP and maltotriose.

Activated by ATP and maltotriose, which are both required for DNA binding. Its function is as follows. Positively regulates the transcription of the maltose regulon whose gene products are responsible for uptake and catabolism of malto-oligosaccharides. Specifically binds to the promoter region of its target genes, recognizing a short DNA motif called the MalT box. The protein is HTH-type transcriptional regulator MalT of Escherichia coli O139:H28 (strain E24377A / ETEC).